The following is a 364-amino-acid chain: Probable dual-specificity RNA methyltransferase RlmN (364 aa).

Glu106 functions as the Proton acceptor in the catalytic mechanism. In terms of domain architecture, Radical SAM core spans 112–350 (YPQRNTVCIS…SCTVRDTRGR (239 aa)). Cys119 and Cys356 are oxidised to a cystine. Residues Cys126, Cys130, and Cys133 each coordinate [4Fe-4S] cluster. S-adenosyl-L-methionine-binding positions include 177–178 (GE), Ser211, 234–236 (SLH), and Asn313. Cys356 (S-methylcysteine intermediate) is an active-site residue.

This sequence belongs to the radical SAM superfamily. RlmN family. [4Fe-4S] cluster serves as cofactor.

It is found in the cytoplasm. It catalyses the reaction adenosine(2503) in 23S rRNA + 2 reduced [2Fe-2S]-[ferredoxin] + 2 S-adenosyl-L-methionine = 2-methyladenosine(2503) in 23S rRNA + 5'-deoxyadenosine + L-methionine + 2 oxidized [2Fe-2S]-[ferredoxin] + S-adenosyl-L-homocysteine. It carries out the reaction adenosine(37) in tRNA + 2 reduced [2Fe-2S]-[ferredoxin] + 2 S-adenosyl-L-methionine = 2-methyladenosine(37) in tRNA + 5'-deoxyadenosine + L-methionine + 2 oxidized [2Fe-2S]-[ferredoxin] + S-adenosyl-L-homocysteine. Specifically methylates position 2 of adenine 2503 in 23S rRNA and position 2 of adenine 37 in tRNAs. The protein is Probable dual-specificity RNA methyltransferase RlmN of Mycobacterium marinum (strain ATCC BAA-535 / M).